Consider the following 545-residue polypeptide: O-phosphoserine--tRNA(Cys) ligase (545 aa).

Substrate is bound by residues histidine 189–threonine 191, serine 234–serine 236, tyrosine 276–tyrosine 277, and asparagine 328.

The protein belongs to the class-II aminoacyl-tRNA synthetase family. O-phosphoseryl-tRNA(Cys) synthetase subfamily. In terms of assembly, homotetramer. Interacts with SepCysS.

The catalysed reaction is tRNA(Cys) + O-phospho-L-serine + ATP = O-phospho-L-seryl-tRNA(Cys) + AMP + diphosphate. Catalyzes the attachment of O-phosphoserine (Sep) to tRNA(Cys). The polypeptide is O-phosphoserine--tRNA(Cys) ligase (Methanothrix thermoacetophila (strain DSM 6194 / JCM 14653 / NBRC 101360 / PT) (Methanosaeta thermophila)).